The chain runs to 151 residues: Putative superoxide dismutase [Cu-Zn] (151 aa).

Cu cation-binding residues include histidine 43, histidine 45, and histidine 60. Cysteine 54 and cysteine 144 are disulfide-bonded. The Zn(2+) site is built by histidine 60, histidine 68, histidine 77, and aspartate 80. Histidine 118 contacts Cu cation.

The protein belongs to the Cu-Zn superoxide dismutase family. It depends on Cu cation as a cofactor. Zn(2+) is required as a cofactor.

It catalyses the reaction 2 superoxide + 2 H(+) = H2O2 + O2. Functionally, nonessential for normal virus replication. Could be either non-functional or with a low activity. This chain is Putative superoxide dismutase [Cu-Zn] (SOD), found in Lepidoptera (butterflies and moths).